Consider the following 299-residue polypeptide: Myozenin-1 (299 aa).

The disordered stretch occupies residues 1–34; sequence MPLSGTPAPNKKRKSSKLIMELTGGGQESSGLNL. Ser82 carries the phosphoserine modification. Residues 102 to 174 form a disordered region; sequence GQGFSYSKSN…TGSGDQAGGE (73 aa). 2 stretches are compositionally biased toward gly residues: residues 112–125 and 137–173; these read GRGGSQAGGSGSAG and SGSGAGGTGGPAGQAGRGGAAGTAGVGETGSGDQAGG.

The protein belongs to the myozenin family. As to quaternary structure, interacts with ACTN2, ACTN3, FLNA, FLNB, FLNC, LDB3, PPP3CA and TCAP. Interacts via its C-terminal region with MYOT. As to expression, expressed primarily in skeletal muscle. Detected at lower levels in heart, prostate and pancreas.

It is found in the nucleus. The protein resides in the cell projection. It localises to the pseudopodium. Functionally, myozenins may serve as intracellular binding proteins involved in linking Z-disk proteins such as alpha-actinin, gamma-filamin, TCAP/telethonin, LDB3/ZASP and localizing calcineurin signaling to the sarcomere. Plays an important role in the modulation of calcineurin signaling. May play a role in myofibrillogenesis. The chain is Myozenin-1 from Homo sapiens (Human).